The following is a 138-amino-acid chain: Cell division protein SepF (138 aa).

The interval 1-59 (MNNKFKDFFGFGDNDSYEERDAYEEHYDEQEEMQNSNRPTNSRDSNVVSIKAGQAGSGP) is disordered. Polar residues predominate over residues 33-48 (MQNSNRPTNSRDSNVV).

This sequence belongs to the SepF family. In terms of assembly, homodimer. Interacts with FtsZ.

The protein localises to the cytoplasm. Cell division protein that is part of the divisome complex and is recruited early to the Z-ring. Probably stimulates Z-ring formation, perhaps through the cross-linking of FtsZ protofilaments. Its function overlaps with FtsA. The chain is Cell division protein SepF from Lactobacillus delbrueckii subsp. bulgaricus (strain ATCC 11842 / DSM 20081 / BCRC 10696 / JCM 1002 / NBRC 13953 / NCIMB 11778 / NCTC 12712 / WDCM 00102 / Lb 14).